The sequence spans 744 residues: ATP-dependent zinc metalloprotease FtsH (744 aa).

Over 1–16 (MQDQNNSNTPKKKKLS) the chain is Cytoplasmic. Residues 17–37 (FWGIIGIVASILVLLVIAYII) traverse the membrane as a helical segment. Residues 38–177 (YYYVSQTTVL…ESIWSTVLRY (140 aa)) lie on the Extracellular side of the membrane. Residues 178 to 198 (GTNIIFLLLFAASFIFMFMSF) form a helical membrane-spanning segment. The Cytoplasmic segment spans residues 199–744 (RSQRGTGGLL…EEKSKDEKNN (546 aa)). 264–271 (GPPGTGKT) serves as a coordination point for ATP. His-486 is a Zn(2+) binding site. The active site involves Glu-487. Zn(2+) contacts are provided by His-490 and Asp-564. Residues 722-744 (IEANKSSSKSTVNEEKSKDEKNN) are disordered. A compositionally biased stretch (basic and acidic residues) spans 733–744 (VNEEKSKDEKNN).

The protein in the central section; belongs to the AAA ATPase family. This sequence in the C-terminal section; belongs to the peptidase M41 family. As to quaternary structure, homohexamer. Zn(2+) serves as cofactor.

It is found in the cell membrane. Functionally, acts as a processive, ATP-dependent zinc metallopeptidase for both cytoplasmic and membrane proteins. Plays a role in the quality control of integral membrane proteins. This is ATP-dependent zinc metalloprotease FtsH from Metamycoplasma arthritidis (strain 158L3-1) (Mycoplasma arthritidis).